We begin with the raw amino-acid sequence, 487 residues long: 3-ketoacyl-CoA synthase 17 (487 aa).

Helical transmembrane passes span 23–43 and 57–77; these read LITH…FMNV and STGF…FFMS. The 290-residue stretch at 74–363 folds into the FAE domain; that stretch reads FFMSRPRSIY…FFATFVAKRL (290 aa). Active-site residues include Cys218, His297, His382, His386, His415, and Asn419.

The protein belongs to the thiolase-like superfamily. Chalcone/stilbene synthases family. As to expression, expressed in flowers.

It is found in the membrane. It carries out the reaction a very-long-chain acyl-CoA + malonyl-CoA + H(+) = a very-long-chain 3-oxoacyl-CoA + CO2 + CoA. It functions in the pathway lipid metabolism; fatty acid biosynthesis. Inhibited by K3 herbicides such as alachlor, allidochlor, anilofos, cafenstrole, fentrazamide and flufenacet. Strongly inhibited by metazachlor. Its function is as follows. Active on saturated acyl-CoAs up to C22. Mediates the synthesis of VLCFAs from 20 to 26 carbons in length (e.g. C20:1, C20, C24, C26). The sequence is that of 3-ketoacyl-CoA synthase 17 from Arabidopsis thaliana (Mouse-ear cress).